The sequence spans 359 residues: Oxopyrrolidines biosynthesis cluster protein G (359 aa).

A disordered region spans residues 1–32; sequence MDHLRDSLLSSLPRDSPSIGAMDYARRDREST. The span at 7-18 shows a compositional bias: low complexity; sequence SLLSSLPRDSPS.

In terms of biological role, part of the gene cluster that mediates the biosynthesis of oxopyrrolidines, polyketide-amino acid hybrid compounds with feature structures of tetramic acid. Does not seem to play a role in oxopyrrolidines A and B biosynthesis. The polypeptide is Oxopyrrolidines biosynthesis cluster protein G (Penicillium oxalicum (strain 114-2 / CGMCC 5302) (Penicillium decumbens)).